A 164-amino-acid chain; its full sequence is S-ribosylhomocysteine lyase (164 aa).

Residues His-54, His-58, and Cys-128 each contribute to the Fe cation site.

Belongs to the LuxS family. As to quaternary structure, homodimer. It depends on Fe cation as a cofactor.

The catalysed reaction is S-(5-deoxy-D-ribos-5-yl)-L-homocysteine = (S)-4,5-dihydroxypentane-2,3-dione + L-homocysteine. Functionally, involved in the synthesis of autoinducer 2 (AI-2) which is secreted by bacteria and is used to communicate both the cell density and the metabolic potential of the environment. The regulation of gene expression in response to changes in cell density is called quorum sensing. Catalyzes the transformation of S-ribosylhomocysteine (RHC) to homocysteine (HC) and 4,5-dihydroxy-2,3-pentadione (DPD). The chain is S-ribosylhomocysteine lyase from Campylobacter jejuni subsp. jejuni serotype O:2 (strain ATCC 700819 / NCTC 11168).